Consider the following 311-residue polypeptide: Ribosomal RNA small subunit methyltransferase H (311 aa).

S-adenosyl-L-methionine contacts are provided by residues 32 to 34, Asp52, Phe79, Asp100, and Gln107; that span reads AGH.

It belongs to the methyltransferase superfamily. RsmH family.

It is found in the cytoplasm. The enzyme catalyses cytidine(1402) in 16S rRNA + S-adenosyl-L-methionine = N(4)-methylcytidine(1402) in 16S rRNA + S-adenosyl-L-homocysteine + H(+). Its function is as follows. Specifically methylates the N4 position of cytidine in position 1402 (C1402) of 16S rRNA. The sequence is that of Ribosomal RNA small subunit methyltransferase H from Staphylococcus haemolyticus (strain JCSC1435).